The primary structure comprises 298 residues: Movement protein BC1 (298 aa).

Belongs to the begomovirus movement protein BC1 family. As to quaternary structure, binds to dimeric supercoiled plasmid DNA. Phosphorylated.

Its subcellular location is the host cell membrane. The protein resides in the host microsome membrane. The protein localises to the host endoplasmic reticulum membrane. Transports viral genome to neighboring plant cells directly through plasmosdesmata, without any budding. The movement protein allows efficient cell to cell propagation, by bypassing the host cell wall barrier. Begomovirus genome is shuttled out of nucleus by Nuclear shuttle protein (NSP) and the movement protein transports the DNA-NSP complex to cell plasmodesmata and facilitates further movement across the cell wall. In Mungbean yellow mosaic virus (strain Vigna) (MYMV), this protein is Movement protein BC1.